Consider the following 345-residue polypeptide: UPF0324 membrane protein Cgl0015/cg0018 (345 aa).

10 consecutive transmembrane segments (helical) span residues 15–37, 44–66, 81–103, 105–124, 134–156, 163–185, 205–227, 261–280, 285–307, and 320–342; these read LRTG…VLIA, FSGV…LIQL, LLRL…SLGF, MLAV…ILMG, VLLI…EGVT, VVTA…PFAT, EIAQ…AVVV, VVPL…STVA, VIAA…LGCG, and PFIL…TLLT.

Belongs to the UPF0324 family.

The protein localises to the cell membrane. The protein is UPF0324 membrane protein Cgl0015/cg0018 of Corynebacterium glutamicum (strain ATCC 13032 / DSM 20300 / JCM 1318 / BCRC 11384 / CCUG 27702 / LMG 3730 / NBRC 12168 / NCIMB 10025 / NRRL B-2784 / 534).